An 89-amino-acid chain; its full sequence is uncharacterized protein (89 aa).

This is an uncharacterized protein from Methanocaldococcus jannaschii (strain ATCC 43067 / DSM 2661 / JAL-1 / JCM 10045 / NBRC 100440) (Methanococcus jannaschii).